The following is a 397-amino-acid chain: LL-diaminopimelate aminotransferase (397 aa).

Substrate contacts are provided by tyrosine 14 and glycine 41. Pyridoxal 5'-phosphate contacts are provided by residues tyrosine 71, 104–105, tyrosine 128, asparagine 174, tyrosine 205, and 233–235; these read AK and SFS. Lysine 105, tyrosine 128, and asparagine 174 together coordinate substrate. The residue at position 236 (lysine 236) is an N6-(pyridoxal phosphate)lysine. Pyridoxal 5'-phosphate-binding residues include arginine 244 and asparagine 275. The substrate site is built by asparagine 275 and arginine 368.

The protein belongs to the class-I pyridoxal-phosphate-dependent aminotransferase family. LL-diaminopimelate aminotransferase subfamily. As to quaternary structure, homodimer. Requires pyridoxal 5'-phosphate as cofactor.

It carries out the reaction (2S,6S)-2,6-diaminopimelate + 2-oxoglutarate = (S)-2,3,4,5-tetrahydrodipicolinate + L-glutamate + H2O + H(+). The protein operates within amino-acid biosynthesis; L-lysine biosynthesis via DAP pathway; LL-2,6-diaminopimelate from (S)-tetrahydrodipicolinate (aminotransferase route): step 1/1. In terms of biological role, involved in the synthesis of meso-diaminopimelate (m-DAP or DL-DAP), required for both lysine and peptidoglycan biosynthesis. Catalyzes the direct conversion of tetrahydrodipicolinate to LL-diaminopimelate. This Chlamydia pneumoniae (Chlamydophila pneumoniae) protein is LL-diaminopimelate aminotransferase.